The primary structure comprises 443 residues: Tubulin beta-1/beta-2 chain (443 aa).

Residues glutamine 11, glutamate 69, serine 138, glycine 142, threonine 143, glycine 144, asparagine 204, and asparagine 226 each contribute to the GTP site. Glutamate 69 provides a ligand contact to Mg(2+). Residues 424-443 (QYQDASAEEEGEFEGEEEEA) are disordered. The segment covering 429-443 (SAEEEGEFEGEEEEA) has biased composition (acidic residues).

Belongs to the tubulin family. As to quaternary structure, dimer of alpha and beta chains. A typical microtubule is a hollow water-filled tube with an outer diameter of 25 nm and an inner diameter of 15 nM. Alpha-beta heterodimers associate head-to-tail to form protofilaments running lengthwise along the microtubule wall with the beta-tubulin subunit facing the microtubule plus end conferring a structural polarity. Microtubules usually have 13 protofilaments but different protofilament numbers can be found in some organisms and specialized cells. Mg(2+) serves as cofactor.

The protein resides in the cytoplasm. It localises to the cytoskeleton. Its function is as follows. Tubulin is the major constituent of microtubules, a cylinder consisting of laterally associated linear protofilaments composed of alpha- and beta-tubulin heterodimers. Microtubules grow by the addition of GTP-tubulin dimers to the microtubule end, where a stabilizing cap forms. Below the cap, tubulin dimers are in GDP-bound state, owing to GTPase activity of alpha-tubulin. The sequence is that of Tubulin beta-1/beta-2 chain (TUBB1) from Chlamydomonas reinhardtii (Chlamydomonas smithii).